The chain runs to 214 residues: Pyridoxine/pyridoxamine 5'-phosphate oxidase (214 aa).

Substrate is bound by residues 9–12 (RKDY) and K67. Residues 62 to 67 (RMVLLK), 77 to 78 (FT), R83, K84, and Q106 contribute to the FMN site. 3 residues coordinate substrate: Y124, R128, and S132. FMN contacts are provided by residues 141–142 (QS) and W186. Residue 192–194 (RLH) participates in substrate binding. R196 serves as a coordination point for FMN.

It belongs to the pyridoxamine 5'-phosphate oxidase family. Homodimer. The cofactor is FMN.

The catalysed reaction is pyridoxamine 5'-phosphate + O2 + H2O = pyridoxal 5'-phosphate + H2O2 + NH4(+). It carries out the reaction pyridoxine 5'-phosphate + O2 = pyridoxal 5'-phosphate + H2O2. It functions in the pathway cofactor metabolism; pyridoxal 5'-phosphate salvage; pyridoxal 5'-phosphate from pyridoxamine 5'-phosphate: step 1/1. Its pathway is cofactor metabolism; pyridoxal 5'-phosphate salvage; pyridoxal 5'-phosphate from pyridoxine 5'-phosphate: step 1/1. Functionally, catalyzes the oxidation of either pyridoxine 5'-phosphate (PNP) or pyridoxamine 5'-phosphate (PMP) into pyridoxal 5'-phosphate (PLP). This Trichormus variabilis (strain ATCC 29413 / PCC 7937) (Anabaena variabilis) protein is Pyridoxine/pyridoxamine 5'-phosphate oxidase.